A 58-amino-acid polypeptide reads, in one-letter code: Preprotein translocase subunit SecG (58 aa).

The Cytoplasmic segment spans residues 1-33; the sequence is MARRRKYEGLNPFVAAGLIKFSEEGELEKIKLS. A helical membrane pass occupies residues 34-55; it reads PKAAIAISLAIIAAILALNLLL. The Extracellular portion of the chain corresponds to 56-58; sequence PPP.

Belongs to the SEC61-beta family. Component of the protein translocase complex. Heterotrimer consisting of alpha (SecY), beta (SecG) and gamma (SecE) subunits. Can form oligomers of the heterotrimer.

Its subcellular location is the cell membrane. Functionally, involved in protein export. The function of the beta subunit is unknown, but it may be involved in stabilization of the trimeric complex. The protein is Preprotein translocase subunit SecG of Pyrobaculum calidifontis (strain DSM 21063 / JCM 11548 / VA1).